The following is a 768-amino-acid chain: Probable LRR receptor-like serine/threonine-protein kinase At4g37250 (768 aa).

The signal sequence occupies residues 1–21 (MRMELISVIFFFFCSVLSSSA). Over 22–328 (LNSDGLVLMK…PNPRTGLRPG (307 aa)) the chain is Extracellular. A glycan (N-linked (GlcNAc...) asparagine) is linked at Asn64. LRR repeat units lie at residues 67–90 (KVLT…GSLL), 91–112 (TLQS…SFFN), 115–137 (ELRF…IGDL), 139–162 (NLLT…ASLR), 163–183 (NLTV…GGWR), 184–206 (VVEF…FGGY), 207–229 (SLQY…IGVN), and 232–254 (RNVT…PVFL). N-linked (GlcNAc...) asparagine glycosylation is present at Asn99. Asn144, Asn163, Asn196, Asn212, Asn233, and Asn242 each carry an N-linked (GlcNAc...) asparagine glycan. The segment at 301 to 324 (PNTIGSNPVTDPNSQQTDPNPRTG) is disordered. Residues 303 to 320 (TIGSNPVTDPNSQQTDPN) are compositionally biased toward polar residues. Residues 329-349 (VIIGIVVGDIAGIGILAVIFL) traverse the membrane as a helical segment. Residues 350–768 (YIYRCKKNKI…IKSSSFHYGH (419 aa)) are Cytoplasmic-facing. The disordered stretch occupies residues 361 to 432 (DNNNNDKQRT…NANQRSGDNK (72 aa)). Low complexity predominate over residues 378 to 387 (STFSSSSSSP). Over residues 407–420 (PSEEEDEDDEDEES) the composition is skewed to acidic residues. The region spanning 449-756 (KASAYILGAT…AVLERFHPNS (308 aa)) is the Protein kinase domain. Ser451 and Ser531 each carry phosphoserine. Position 553 is a phosphothreonine (Thr553). Residue Ser662 is modified to Phosphoserine.

This sequence belongs to the protein kinase superfamily. Ser/Thr protein kinase family.

It localises to the membrane. The enzyme catalyses L-seryl-[protein] + ATP = O-phospho-L-seryl-[protein] + ADP + H(+). It carries out the reaction L-threonyl-[protein] + ATP = O-phospho-L-threonyl-[protein] + ADP + H(+). This chain is Probable LRR receptor-like serine/threonine-protein kinase At4g37250, found in Arabidopsis thaliana (Mouse-ear cress).